Reading from the N-terminus, the 346-residue chain is MAIDLKKHKSRRIILTKQGKRTERHIPVLLQPVLAGLIPLVGAKVIDGTFGAGGYTRALLNAGAQVIALDRDPHAIREGQSLVDEFFPRLRLVQGNFSQLDCVVEEKVDAVILDIGVSSMQLDEAERGFSFQKDGPLDMRMAQTGFTAADVVNRLKSDELARIFKILGEERYARRIARMIEKRRCVQPFLRTGDLAHAIEVLVGRKSGERIHPATRVFQALRIYVNDEIGELARGLFAAERVLKPGGRLGVVSFHSLEDRMVKRFFSARSGESVRSRYLPEIEMAPATFFPLFKGGITANKEELERNPRSRSARLRIGVRTEAECLFADMKLFGLAKIASFEGGKK.

Residues 53-55, aspartate 70, phenylalanine 97, aspartate 114, and glutamine 121 each bind S-adenosyl-L-methionine; that span reads GGY.

This sequence belongs to the methyltransferase superfamily. RsmH family.

It is found in the cytoplasm. It carries out the reaction cytidine(1402) in 16S rRNA + S-adenosyl-L-methionine = N(4)-methylcytidine(1402) in 16S rRNA + S-adenosyl-L-homocysteine + H(+). Its function is as follows. Specifically methylates the N4 position of cytidine in position 1402 (C1402) of 16S rRNA. This Bartonella henselae (strain ATCC 49882 / DSM 28221 / CCUG 30454 / Houston 1) (Rochalimaea henselae) protein is Ribosomal RNA small subunit methyltransferase H.